Reading from the N-terminus, the 185-residue chain is Protein E3 homolog (185 aa).

Positions Thr7–Tyr73 constitute a Z-binding domain. The 68-residue stretch at Asn112–Asp179 folds into the DRBM domain.

The protein belongs to the poxviridae E3 protein family.

In terms of biological role, RNA-binding protein that plays a role in the inhibition of multiple cellular antiviral responses activated by double-stranded RNA (dsRNA), such as inhibition of PKR activation, necroptosis, and IFN-mediated antiviral activities. Recognizes and binds Z-RNA structures via its Z-binding domain and dsRNA via its DRBM domain: RNA-binding activity is required to escape host ZBP1-dependent necroptosis. Mechanistically, the Z-binding domain binds Z-RNAs that are produced during Yaba-like disease virus infection, thereby competing with Z-RNA detection by host ZBP1, suppressing ZBP1-dependent necroptosis. The protein is Protein E3 homolog of Yaba-like disease virus (YLDV).